Consider the following 195-residue polypeptide: Coagulogen (195 aa).

The signal sequence occupies residues 1-20; the sequence is MEKKLLGIAILFVTVVSVLA. 8 disulfide bridges follow: Cys28–Cys188, Cys30–Cys115, Cys80–Cys182, Cys85–Cys141, Cys95–Cys189, Cys108–Cys161, Cys147–Cys191, and Cys155–Cys193.

The protein belongs to the coagulin family. As to quaternary structure, coagulogen is cleaved after Arg-38 and Arg-66 by a clotting enzyme contained in the hemocyte and activated by a bacterial endotoxin (lipopolysaccharide). This cleavage releases the peptide C and leaves 2 chains of coagulin, A and B, linked by two disulfide bonds. Coagulin molecules interlink to form a gel. Hemolymph.

The protein localises to the secreted. Functionally, coagulogen is a gel-forming protein of hemolymph; it hinders the spread of invaders by immobilizing them. This Limulus polyphemus (Atlantic horseshoe crab) protein is Coagulogen.